Reading from the N-terminus, the 355-residue chain is Lipoyl synthase (355 aa).

The RPE1 insert domain maps to 7-55; the sequence is HLSKFAYREEFAGNTEVLATAAYKEDCADASTGLTPKLPLEVEFGKMSK. Cysteine 86, cysteine 91, cysteine 97, cysteine 112, cysteine 116, cysteine 119, and serine 325 together coordinate [4Fe-4S] cluster. The Radical SAM core domain maps to 98–314; the sequence is WSKKHATVMI…ERVARTKGFL (217 aa).

The protein belongs to the radical SAM superfamily. Lipoyl synthase family. It depends on [4Fe-4S] cluster as a cofactor.

It is found in the cytoplasm. It catalyses the reaction [[Fe-S] cluster scaffold protein carrying a second [4Fe-4S](2+) cluster] + N(6)-octanoyl-L-lysyl-[protein] + 2 oxidized [2Fe-2S]-[ferredoxin] + 2 S-adenosyl-L-methionine + 4 H(+) = [[Fe-S] cluster scaffold protein] + N(6)-[(R)-dihydrolipoyl]-L-lysyl-[protein] + 4 Fe(3+) + 2 hydrogen sulfide + 2 5'-deoxyadenosine + 2 L-methionine + 2 reduced [2Fe-2S]-[ferredoxin]. The protein operates within protein modification; protein lipoylation via endogenous pathway; protein N(6)-(lipoyl)lysine from octanoyl-[acyl-carrier-protein]: step 2/2. In terms of biological role, catalyzes the radical-mediated insertion of two sulfur atoms into the C-6 and C-8 positions of the octanoyl moiety bound to the lipoyl domains of lipoate-dependent enzymes, thereby converting the octanoylated domains into lipoylated derivatives. The chain is Lipoyl synthase from Rickettsia bellii (strain RML369-C).